Here is a 559-residue protein sequence, read N- to C-terminus: 2,3-bisphosphoglycerate-independent phosphoglycerate mutase (559 aa).

Residues aspartate 28 and serine 81 each contribute to the Mn(2+) site. The active-site Phosphoserine intermediate is serine 81. Substrate-binding positions include histidine 140, 170 to 171 (RD), arginine 206, arginine 213, 286 to 289 (RADR), and lysine 361. Mn(2+) is bound by residues aspartate 430, histidine 434, aspartate 471, histidine 472, and histidine 501.

Belongs to the BPG-independent phosphoglycerate mutase family. Monomer. Requires Mn(2+) as cofactor.

It localises to the cytoplasm. It catalyses the reaction (2R)-2-phosphoglycerate = (2R)-3-phosphoglycerate. The protein operates within carbohydrate degradation; glycolysis; pyruvate from D-glyceraldehyde 3-phosphate: step 3/5. Functionally, catalyzes the interconversion of 2-phosphoglycerate and 3-phosphoglycerate. The polypeptide is 2,3-bisphosphoglycerate-independent phosphoglycerate mutase (PGM1) (Mesembryanthemum crystallinum (Common ice plant)).